A 560-amino-acid chain; its full sequence is Glycolate permease GlcA (560 aa).

Topologically, residues 1–13 are cytoplasmic; sequence MVTWTQMYMPMGG. The helical transmembrane segment at 14-34 threads the bilayer; sequence LGLSALVALIPIIFFFVALAV. At 35 to 41 the chain is on the periplasmic side; the sequence is LRLKGHV. The chain crosses the membrane as a helical span at residues 42–62; that stretch reads AGAITLILSILIAIFAFKMPI. The Cytoplasmic portion of the chain corresponds to 63-69; it reads DMAFAAA. Residues 70-90 form a helical membrane-spanning segment; it reads GYGFIYGLWPIAWIIVAAVFL. The Periplasmic segment spans residues 91-130; the sequence is YKLTVASGQFDIIRSSVISITDDQRLQVLLIGFSFGALLE. A helical membrane pass occupies residues 131–151; sequence GAAGFGAPVAITGALLVGLGF. The Cytoplasmic segment spans residues 152 to 158; it reads KPLYAAG. A helical transmembrane segment spans residues 159 to 179; it reads LCLIANTAPVAFGALGVPILV. Residues 180 to 199 are Periplasmic-facing; sequence AGQVTGIDPFHIGAMAGRQL. A helical transmembrane segment spans residues 200–220; it reads PFLSVLVPFWLVAMMDGWKGV. The Cytoplasmic segment spans residues 221–225; the sequence is KETWP. Residues 226–246 traverse the membrane as a helical segment; that stretch reads AALVAGGSFAVTQFFTSNYIG. Topologically, residues 247–248 are periplasmic; that stretch reads PE. The chain crosses the membrane as a helical span at residues 249–269; the sequence is LPDITSALVSIVSLALFLKVW. At 270 to 313 the chain is on the cytoplasmic side; sequence RPKNTETAISMGQSAGAMVVNKPSSGGPVPSEYSLGQIIRAWSP. The chain crosses the membrane as a helical span at residues 314-334; sequence FLILTVLVTIWTMKPFKALFA. Residues 335–378 are Periplasmic-facing; the sequence is PGGAFYSLVINFQIPHLHQQVLKAAPIVAQPTPMDAVFKFDPLS. Residues 379–399 traverse the membrane as a helical segment; the sequence is AGGTAIFIAAIISIFILGVGI. At 400 to 408 the chain is on the cytoplasmic side; it reads KKGIGVFAE. The chain crosses the membrane as a helical span at residues 409–429; sequence TLISLKWPILSIGMVLAFAFV. The Periplasmic segment spans residues 430 to 438; it reads TNYSGMSTT. Residues 439-459 form a helical membrane-spanning segment; it reads LALVLAGTGVMFPFFSPFLGW. Over 460-536 the chain is Cytoplasmic; the sequence is LGVFLTGSDT…ELFRYTVKHS (77 aa). Residues 537 to 557 form a helical membrane-spanning segment; that stretch reads LIFASVIGIITLLQAYVFTGM. Topologically, residues 558–560 are periplasmic; the sequence is LVS.

Belongs to the lactate permease family.

The protein resides in the cell inner membrane. The enzyme catalyses glycolate(in) + H(+)(in) = glycolate(out) + H(+)(out). The catalysed reaction is (S)-lactate(in) + H(+)(in) = (S)-lactate(out) + H(+)(out). It carries out the reaction (R)-lactate(in) + H(+)(in) = (R)-lactate(out) + H(+)(out). With respect to regulation, inhibited by the proton ionophore carbonyl cyanide m-chlorophenylhydrazone (CCCP). Its function is as follows. Uptake of glycolate across the membrane. Can also transport L-lactate and D-lactate. Seems to be driven by a proton motive force. The polypeptide is Glycolate permease GlcA (Escherichia coli (strain K12)).